A 464-amino-acid polypeptide reads, in one-letter code: L-cystine uptake protein TcyP (464 aa).

Helical transmembrane passes span 3–23 (TLLV…LYYM), 34–54 (VFTA…IYEP), 73–93 (YVKL…ISAF), 107–127 (GLII…GIAA), 184–204 (PTST…FIGV), 225–245 (IVMR…LALM), 263–283 (FVLA…LLIA), 347–367 (AGIY…IDPL), 371–391 (FILT…GVGG), and 395–415 (FAAL…ALVI).

This sequence belongs to the dicarboxylate/amino acid:cation symporter (DAACS) (TC 2.A.23) family.

The protein localises to the membrane. In terms of biological role, mediates uptake of L-cystine, the oxidized form of L-cysteine. The polypeptide is L-cystine uptake protein TcyP (Bacillus thuringiensis subsp. konkukian (strain 97-27)).